We begin with the raw amino-acid sequence, 61 residues long: Potassium channel toxin alpha-KTx 3.18 (61 aa).

The N-terminal stretch at 1–23 is a signal peptide; that stretch reads MKMFFTVLVTLFVCSMIIGICEG. Intrachain disulfides connect Cys-30/Cys-50, Cys-36/Cys-55, and Cys-40/Cys-57. Lys-60 is subject to Lysine amide.

Expressed by the venom gland.

The protein resides in the secreted. Functionally, inhibits voltage-gated potassium channel rKv1.1/KCNA1 at nanomolar ranges (IC(50)=90 +-2 nM, reduction of current by 30% at 50 nM or toxin). The protein is Potassium channel toxin alpha-KTx 3.18 of Mesobuthus eupeus (Lesser Asian scorpion).